The primary structure comprises 112 residues: Colipase (112 aa).

A signal peptide spans 1–17; sequence MEKILVLLLVALAVVYA. A propeptide spans 18 to 22 (enterostatin, activation peptide); that stretch reads VPDPR. 5 disulfide bridges follow: cysteine 34-cysteine 45, cysteine 40-cysteine 56, cysteine 44-cysteine 78, cysteine 66-cysteine 86, and cysteine 80-cysteine 104.

Belongs to the colipase family. As to quaternary structure, forms a 1:1 stoichiometric complex with pancreatic lipase. In terms of tissue distribution, expressed by the pancreas.

The protein resides in the secreted. In terms of biological role, colipase is a cofactor of pancreatic lipase. It allows the lipase to anchor itself to the lipid-water interface. Without colipase the enzyme is washed off by bile salts, which have an inhibitory effect on the lipase. Enterostatin has a biological activity as a satiety signal. In Canis lupus familiaris (Dog), this protein is Colipase (CLPS).